Reading from the N-terminus, the 21-residue chain is Peptide PGLa-R4 (21 aa).

Leu-21 carries the leucine amide modification.

As to expression, expressed by the skin glands.

Its subcellular location is the secreted. Antimicrobial peptide. In Xenopus ruwenzoriensis (Uganda clawed frog), this protein is Peptide PGLa-R4.